Here is an 885-residue protein sequence, read N- to C-terminus: Alanine--tRNA ligase (885 aa).

Positions 574, 578, 685, and 689 each coordinate Zn(2+).

It belongs to the class-II aminoacyl-tRNA synthetase family. Zn(2+) serves as cofactor.

It localises to the cytoplasm. The catalysed reaction is tRNA(Ala) + L-alanine + ATP = L-alanyl-tRNA(Ala) + AMP + diphosphate. Its function is as follows. Catalyzes the attachment of alanine to tRNA(Ala) in a two-step reaction: alanine is first activated by ATP to form Ala-AMP and then transferred to the acceptor end of tRNA(Ala). Also edits incorrectly charged Ser-tRNA(Ala) and Gly-tRNA(Ala) via its editing domain. The polypeptide is Alanine--tRNA ligase (Deinococcus geothermalis (strain DSM 11300 / CIP 105573 / AG-3a)).